The following is a 362-amino-acid chain: Serine/threonine-protein kinase-like protein At3g51990 (362 aa).

A signal peptide spans 1–24; that stretch reads MGYLSCKAGSAVAIAVSSAASTSG. The segment covering 21–32 has biased composition (low complexity); that stretch reads STSGSTSSKASA. A disordered region spans residues 21–43; it reads STSGSTSSKASAPPESPIEDRPR. The region spanning 59–329 is the Protein kinase domain; the sequence is FDINNLLGRG…PGMEEVVGWL (271 aa). ATP contacts are provided by residues 65-73 and Lys86; that span reads LGRGSHGSV. N-linked (GlcNAc...) asparagine glycosylation occurs at Asn136. Asp185 (proton acceptor) is an active-site residue. A Phosphoserine modification is found at Ser219. 2 positions are modified to phosphothreonine: Thr220 and Thr225. Tyr233 is modified (phosphotyrosine).

The protein belongs to the protein kinase superfamily. Ser/Thr protein kinase family.

The protein localises to the secreted. The catalysed reaction is L-seryl-[protein] + ATP = O-phospho-L-seryl-[protein] + ADP + H(+). It carries out the reaction L-threonyl-[protein] + ATP = O-phospho-L-threonyl-[protein] + ADP + H(+). The sequence is that of Serine/threonine-protein kinase-like protein At3g51990 from Arabidopsis thaliana (Mouse-ear cress).